The primary structure comprises 229 residues: Putative N-acetylmannosamine-6-phosphate 2-epimerase (229 aa).

This sequence belongs to the NanE family.

The catalysed reaction is an N-acyl-D-glucosamine 6-phosphate = an N-acyl-D-mannosamine 6-phosphate. Its pathway is amino-sugar metabolism; N-acetylneuraminate degradation; D-fructose 6-phosphate from N-acetylneuraminate: step 3/5. Functionally, converts N-acetylmannosamine-6-phosphate (ManNAc-6-P) to N-acetylglucosamine-6-phosphate (GlcNAc-6-P). This Escherichia coli O8 (strain IAI1) protein is Putative N-acetylmannosamine-6-phosphate 2-epimerase.